Reading from the N-terminus, the 138-residue chain is MAKSISKIGSRKNARIGSRKQTRKIPKGVIYVQASFNNTIVTVTDVRGRVISWSSAGSCGFKGTRRGTPFAAQTAAANAIRTVVDQGMQRAEVIIKGPGLGRDAALRAIRRSGILLRFIRDVTPMPHNGCRAPKKRRV.

The segment at 1 to 21 (MAKSISKIGSRKNARIGSRKQ) is disordered. Residues 9-21 (GSRKNARIGSRKQ) show a composition bias toward basic residues.

This sequence belongs to the universal ribosomal protein uS11 family. As to quaternary structure, part of the 30S ribosomal subunit.

It is found in the plastid. The protein resides in the chloroplast. The chain is Small ribosomal subunit protein uS11c from Cicer arietinum (Chickpea).